We begin with the raw amino-acid sequence, 642 residues long: Rhotekin-2 (642 aa).

The REM-1 domain occupies isoleucine 30 to phenylalanine 105. A PH domain is found at leucine 306–tyrosine 413. 2 disordered regions span residues threonine 505 to serine 563 and leucine 575 to tryptophan 642. 2 stretches are compositionally biased toward basic and acidic residues: residues proline 597–isoleucine 615 and serine 632–tryptophan 642.

The sequence is that of Rhotekin-2 (rtkn2) from Danio rerio (Zebrafish).